A 447-amino-acid chain; its full sequence is Secretin receptor (447 aa).

A signal peptide spans 1 to 28; that stretch reads MLSTMSPRLSLLLLWLLLLINAAHPVGA. The Extracellular segment spans residues 29–140; that stretch reads LPRLCDVRRV…NERRHAYLLK (112 aa). Cystine bridges form between Cys46–Cys74, Cys65–Cys106, and Cys88–Cys122. 4 N-linked (GlcNAc...) asparagine glycosylation sites follow: Asn71, Asn99, Asn105, and Asn127. Residues 141-166 traverse the membrane as a helical segment; sequence LKVMYTVGYSSSLAMLLVALSILCSF. At 167 to 173 the chain is on the cytoplasmic side; it reads RRLHCTR. Residues 174-194 traverse the membrane as a helical segment; it reads NYIHMHLFVSFILRALSNFIK. Residues 195 to 215 lie on the Extracellular side of the membrane; it reads DAVLFPADDVTYCDAHRAGCK. The cysteines at positions 214 and 284 are disulfide-linked. A helical membrane pass occupies residues 216–238; sequence LVMIFFQYCIMANYAWLLVEGLY. Residues 239 to 253 are Cytoplasmic-facing; it reads LHTLLAISFFSERKC. A helical transmembrane segment spans residues 254–275; the sequence is LQAFVLFGWGSPAIFVALWAVT. The Extracellular segment spans residues 276-290; sequence RHFLEDFGCWDINSN. Asn290 carries N-linked (GlcNAc...) asparagine glycosylation. A helical membrane pass occupies residues 291–314; sequence ASIWWVIRGPVILSIVINFIFFIN. Over 315-339 the chain is Cytoplasmic; the sequence is ILRILMRKLRTQETRGNETHHYKRL. Residues 340 to 355 form a helical membrane-spanning segment; the sequence is AKSTLLLIPLFGIHYI. The Extracellular segment spans residues 356–366; that stretch reads VFAFSPEGAME. The chain crosses the membrane as a helical span at residues 367-390; it reads VQLFFELALGSFQGLVVAVLYCFL. Residues 391–447 are Cytoplasmic-facing; sequence NGELEVQKKWRQWHLQEFPLRPVALSNSFSNATNGPTHSTKAGTSEQSRSIPGANVI. Residues 423–440 show a composition bias toward polar residues; it reads TNGPTHSTKAGTSEQSRS. The disordered stretch occupies residues 423–447; the sequence is TNGPTHSTKAGTSEQSRSIPGANVI.

The protein belongs to the G-protein coupled receptor 2 family. In terms of processing, phosphorylated on Ser and Thr residues at the cytoplasmic C-terminus by G protein-coupled receptor kinases (GRKs). In terms of tissue distribution, in brain, expressed in the hippocampal CA1 region, the lower layer of cerebral cortex, the anterior olfactory nuclei, the anterior ventrolateral thalamus, the lateral region of hypothalamus, substantia nigra, tegmental area and central nucleus of the inferior colliculus, the ventral supramamillary nucleus and the cerebellum. Expressed in brown adipocytes: expression predominates in mature brown adipocytes (at protein level). Detected in the renal medulla, where it localized predominantly on the basolateral membranes of cells in the collecting ducts (blue arrow) and the ascending thick segments of the loop of Henle.

The protein resides in the cell membrane. It is found in the basolateral cell membrane. G protein-coupled receptor activated by secretin (SCT), which is involved in different processes such as regulation of the pH of the duodenal content, food intake and water homeostasis. Ligand binding causes a conformation change that triggers signaling via guanine nucleotide-binding proteins (G proteins) and activates cAMP-dependent pathway. Upon binding to secretin, regulates the pH of the duodenum by (1) inhibiting the secretion of gastric acid from the parietal cells of the stomach and (2) stimulating the production of bicarbonate (NaHCO(3)) from the ductal cells of the pancreas. In addition to regulating the pH of the duodenal content, plays a central role in diet induced thermogenesis: acts as a non-sympathetic brown fat (BAT) activator mediating prandial thermogenesis, which consequentially induces satiation. Mechanistically, secretin released by the gut after a meal binds to secretin receptor (SCTR) in brown adipocytes, activating brown fat thermogenesis by stimulating lipolysis, which is sensed in the brain and promotes satiation. Also able to stimulate lipolysis in white adipocytes. Also plays an important role in cellular osmoregulation by regulating renal water reabsorption. Also plays a role in the central nervous system: required for synaptic plasticity. The sequence is that of Secretin receptor from Mus musculus (Mouse).